The sequence spans 443 residues: RILP-like protein homolog (443 aa).

The RH1 domain maps to 8-96; it reads EMGEMVLDAI…ESEKLEKAEF (89 aa). A coiled-coil region spans residues 59-315; the sequence is LELLEALATK…TLNEQLAELK (257 aa). The RH2 domain occupies 282 to 401; sequence RPRYTTRELK…KSSESGIRKF (120 aa). A disordered region spans residues 311 to 394; sequence LAELKPPSQA…PDDAPWKKSS (84 aa). Positions 332-355 are enriched in acidic residues; sequence DDSDEDDDGHVADNDDDDDEEEAA. Over residues 356-368 the composition is skewed to low complexity; that stretch reads AEANELEPPAAGE.

Belongs to the RILPL family. As to quaternary structure, interacts with Arl8 (in GTP-bound form).

It is found in the lysosome membrane. Functionally, may have a role in lysosome distribution by interacting with Arl8. This chain is RILP-like protein homolog, found in Drosophila melanogaster (Fruit fly).